The primary structure comprises 377 residues: Histidinol-phosphate aminotransferase 2 (377 aa).

Positions 17 to 44 (NLSPYVPGEQPQHDDLCKLNTNENPFPP) are disordered. Residue K228 is modified to N6-(pyridoxal phosphate)lysine.

Belongs to the class-II pyridoxal-phosphate-dependent aminotransferase family. Histidinol-phosphate aminotransferase subfamily. In terms of assembly, homodimer. The cofactor is pyridoxal 5'-phosphate.

It carries out the reaction L-histidinol phosphate + 2-oxoglutarate = 3-(imidazol-4-yl)-2-oxopropyl phosphate + L-glutamate. It participates in amino-acid biosynthesis; L-histidine biosynthesis; L-histidine from 5-phospho-alpha-D-ribose 1-diphosphate: step 7/9. The protein is Histidinol-phosphate aminotransferase 2 of Psychrobacter arcticus (strain DSM 17307 / VKM B-2377 / 273-4).